The sequence spans 104 residues: Transcription factor S (104 aa).

Residues C4, C7, C20, C22, C65, C68, C93, and C96 each coordinate Zn(2+). Residues 4 to 22 (CPKCGAVMFPSEGKFKCQC) form a C4-type zinc finger. The TFIIS-type zinc finger occupies 61 to 101 (TRVECPKCGNMEAFWWLQQTRRADESETRFFRCTRCKHTWR).

This sequence belongs to the archaeal RpoM/eukaryotic RPA12/RPB9/RPC11 RNA polymerase family.

In terms of biological role, induces RNA cleavage activity in the RNA polymerase. In its presence, the cleavage activity of the RNA polymerase truncates the RNA back to position +15 in a stepwise manner by releasing mainly dinucleotides from the 3'-end of the nascent RNA. The truncated RNAs are able to continue elongation. Involved in transcriptional proofreading and fidelity. Misincorporation of nucleotides during elongation of transcription leads to arrested elongation complexes which are rescued by TFS-promoted removal of a dinucleotide from the 3'-end. TFS is able to induce a cleavage resynthesis cycle in stalled elongation complexes (resulting from the next missing nucleotide or a reduced incorporation rate of a wrong nucleotide) preventing misincorporation and enabling proofreading in a post-incorporation manner. Pausing of elongation complexes is the main determinant of TFS-induced RNA cleavage. The protein is Transcription factor S of Methanothermobacter thermautotrophicus (strain ATCC 29096 / DSM 1053 / JCM 10044 / NBRC 100330 / Delta H) (Methanobacterium thermoautotrophicum).